Here is a 218-residue protein sequence, read N- to C-terminus: Probable GTP-binding protein EngB (218 aa).

Residues 44-218 (DRIEVCFAGR…LRATIATIET (175 aa)) form the EngB-type G domain. Residues 52-59 (GRSNVGKS), 79-83 (GRTQE), 97-100 (DLPG), 164-167 (TKSD), and 198-200 (TSS) each bind GTP. Mg(2+) contacts are provided by Ser-59 and Thr-81.

Belongs to the TRAFAC class TrmE-Era-EngA-EngB-Septin-like GTPase superfamily. EngB GTPase family. Mg(2+) serves as cofactor.

In terms of biological role, necessary for normal cell division and for the maintenance of normal septation. The protein is Probable GTP-binding protein EngB of Jannaschia sp. (strain CCS1).